Consider the following 1014-residue polypeptide: Pre-mRNA-processing ATP-dependent RNA helicase prp11 (1014 aa).

Basic residues predominate over residues 1–11 (MSRRTRSRSPP). The interval 1-149 (MSRRTRSRSP…SRFDRTERVG (149 aa)) is disordered. 2 stretches are compositionally biased toward basic and acidic residues: residues 15 to 87 (YNRE…EYAR) and 106 to 121 (RHAE…KSDE). A Q motif motif is present at residues 418–446 (TSWSQCGLSAQTISVINSLGYEKPTSIQA). Residues 449–627 (IPAITSGRDV…RKVLKKPVEI (179 aa)) form the Helicase ATP-binding domain. Position 462 to 469 (462 to 469 (AKTGSGKT)) interacts with ATP. The DEAD box signature appears at 575–578 (DEAD). In terms of domain architecture, Helicase C-terminal spans 638–802 (EVEQIVEVRP…PVPKELQTLA (165 aa)). Residues 815-875 (KAAGGGFGGK…PEKSTGDPTL (61 aa)) are disordered. Composition is skewed to basic and acidic residues over residues 827–838 (SRLDETRNAERK) and 855–875 (AEAK…DPTL).

This sequence belongs to the DEAD box helicase family. DDX46/PRP5 subfamily.

Its subcellular location is the nucleus. It carries out the reaction ATP + H2O = ADP + phosphate + H(+). ATP-dependent RNA helicase involved in pre-spliceosome/complex A assembly and mRNA splicing. Bridges U1 and U2 snRNPs during pre-spliceosome assembly and enables stable U2 snRNP association with intron RNA. Through its helicase activity probably catalyzes an ATP-dependent conformational change of U2 snRNP. The polypeptide is Pre-mRNA-processing ATP-dependent RNA helicase prp11 (prp11) (Schizosaccharomyces pombe (strain 972 / ATCC 24843) (Fission yeast)).